Consider the following 58-residue polypeptide: UPF0337 protein SAV_738 (58 aa).

The disordered stretch occupies residues 1 to 58 (MAADEKAQANGEQAKGKVKKVVGGAAGNESLKGKGHAEESKGDLRAAKEKAKDAIKRK). A compositionally biased stretch (basic and acidic residues) spans 31 to 58 (LKGKGHAEESKGDLRAAKEKAKDAIKRK).

Belongs to the UPF0337 (CsbD) family.

The polypeptide is UPF0337 protein SAV_738 (Streptomyces avermitilis (strain ATCC 31267 / DSM 46492 / JCM 5070 / NBRC 14893 / NCIMB 12804 / NRRL 8165 / MA-4680)).